The primary structure comprises 434 residues: NFATC2-interacting protein (434 aa).

2 disordered regions span residues 1 to 63 (MGSP…TPAL) and 176 to 237 (GSED…RAYN). A compositionally biased stretch (pro residues) spans 28–59 (GPQPCPKPRGPQPCPKPRGPQPCPKPRGPQPC). Basic residues predominate over residues 228–237 (PVRRKGRAYN). In terms of domain architecture, Ubiquitin-like spans 275–351 (PELTVKVRRG…IDCVVLSPPD (77 aa)).

The protein resides in the nucleus. Its subcellular location is the cytoplasm. In terms of biological role, regulates the magnitude of NFAT-driven transcription of a specific subset of cytokine genes. This Xenopus tropicalis (Western clawed frog) protein is NFATC2-interacting protein (nfatc2ip).